The chain runs to 182 residues: ATP-dependent protease subunit HslV (182 aa).

T12 is an active-site residue. Residues A167, C170, and T173 each contribute to the Na(+) site.

This sequence belongs to the peptidase T1B family. HslV subfamily. A double ring-shaped homohexamer of HslV is capped on each side by a ring-shaped HslU homohexamer. The assembly of the HslU/HslV complex is dependent on binding of ATP.

Its subcellular location is the cytoplasm. The catalysed reaction is ATP-dependent cleavage of peptide bonds with broad specificity.. Allosterically activated by HslU binding. Protease subunit of a proteasome-like degradation complex believed to be a general protein degrading machinery. In Prosthecochloris aestuarii (strain DSM 271 / SK 413), this protein is ATP-dependent protease subunit HslV.